Consider the following 351-residue polypeptide: Dihydroorotate dehydrogenase (quinone) (351 aa).

FMN-binding positions include 65 to 69 and Thr-89; that span reads AGLDK. Lys-69 contacts substrate. 114–118 is a binding site for substrate; sequence NRLGF. 2 residues coordinate FMN: Asn-150 and Asn-183. Asn-183 contacts substrate. Ser-186 (nucleophile) is an active-site residue. Asn-188 is a binding site for substrate. The FMN site is built by Lys-228 and Thr-256. 257 to 258 contacts substrate; sequence NT. FMN-binding positions include Gly-279, Gly-308, and 329–330; that span reads YT.

The protein belongs to the dihydroorotate dehydrogenase family. Type 2 subfamily. Monomer. FMN serves as cofactor.

The protein localises to the cell membrane. It catalyses the reaction (S)-dihydroorotate + a quinone = orotate + a quinol. It participates in pyrimidine metabolism; UMP biosynthesis via de novo pathway; orotate from (S)-dihydroorotate (quinone route): step 1/1. In terms of biological role, catalyzes the conversion of dihydroorotate to orotate with quinone as electron acceptor. In Acidovorax sp. (strain JS42), this protein is Dihydroorotate dehydrogenase (quinone).